We begin with the raw amino-acid sequence, 549 residues long: Hydroxylamine reductase (549 aa).

Residues Cys-3, Cys-6, Cys-18, and Cys-25 each coordinate [2Fe-2S] cluster. Hybrid [4Fe-2O-2S] cluster contacts are provided by His-248, Glu-272, Cys-316, Cys-404, Cys-432, Cys-457, Glu-491, and Lys-493. Cys-404 is modified (cysteine persulfide).

It belongs to the HCP family. [2Fe-2S] cluster is required as a cofactor. Requires hybrid [4Fe-2O-2S] cluster as cofactor.

It is found in the cytoplasm. It carries out the reaction A + NH4(+) + H2O = hydroxylamine + AH2 + H(+). Functionally, catalyzes the reduction of hydroxylamine to form NH(3) and H(2)O. This Aeromonas hydrophila subsp. hydrophila (strain ATCC 7966 / DSM 30187 / BCRC 13018 / CCUG 14551 / JCM 1027 / KCTC 2358 / NCIMB 9240 / NCTC 8049) protein is Hydroxylamine reductase.